The sequence spans 325 residues: MKKHISMLFVFLMAVMVLSACNSSESSSNSEVSSSKTRTVKHAMGTSDNIPANPKRIVVLTNEGTEALLALGIKPVGAVKSWKGDPWYDYLKDDMKGVKNVGLETEPNVEAIAELKPDLIIGNKVRQEKIYDQLNAIAPTVFAESLAGNWKDNLTLYANAVNKADKGKEVIADFDKRVSDLKNKLGDQTNKTVSVVRFLSGESRIYYTDSFPGIILDQLGFKRPEKQVELFKKQKDQFTFSTDSKESIPDMDADVLFYFTYKADNAKENEKWANQWTSSSLWKNLKAVKSGNAHEVDDVVWTTAGGIKAANYLLDDIETYFLKTK.

An N-terminal signal peptide occupies residues 1 to 20 (MKKHISMLFVFLMAVMVLSA). A lipid anchor (N-palmitoyl cysteine) is attached at cysteine 21. Cysteine 21 carries S-diacylglycerol cysteine lipidation. The 270-residue stretch at 56–325 (RIVVLTNEGT…DIETYFLKTK (270 aa)) folds into the Fe/B12 periplasmic-binding domain. Residue serine 290 is modified to Phosphoserine. Threonine 302 carries the post-translational modification Phosphothreonine.

The protein belongs to the bacterial solute-binding protein 8 family. As to quaternary structure, the complex is composed of one ATP-binding protein (YusV), two transmembrane proteins (YfiZ and YfhA) and a solute-binding protein (YfiY). Interacts with FloT.

The protein localises to the cell membrane. Its subcellular location is the cytoplasm. It is found in the membrane raft. Its function is as follows. Part of the ABC transporter complex YfiYZ/YfhA/YusV involved in import of the iron-hydroxamate siderophores schizokinen, arthrobactin and corprogen. Binds the siderophores and delivers them to the surface of YfiZ/YfhA. This chain is Probable siderophore-binding lipoprotein YfiY (yfiY), found in Bacillus subtilis (strain 168).